We begin with the raw amino-acid sequence, 153 residues long: Aspartate carbamoyltransferase regulatory chain (153 aa).

Zn(2+)-binding residues include cysteine 109, cysteine 114, cysteine 138, and cysteine 141.

Belongs to the PyrI family. Contains catalytic and regulatory chains. Requires Zn(2+) as cofactor.

Involved in allosteric regulation of aspartate carbamoyltransferase. The sequence is that of Aspartate carbamoyltransferase regulatory chain from Salmonella schwarzengrund (strain CVM19633).